A 44-amino-acid chain; its full sequence is SPbeta prophage-derived uncharacterized protein YosI (44 aa).

The chain is SPbeta prophage-derived uncharacterized protein YosI (yosI) from Bacillus subtilis (strain 168).